The sequence spans 130 residues: Small ribosomal subunit protein uS9 (130 aa).

Positions 109-130 (RMKERKKYGLKGARRAPQFSKR) are disordered. Basic residues predominate over residues 111-130 (KERKKYGLKGARRAPQFSKR).

The protein belongs to the universal ribosomal protein uS9 family.

In Alkaliphilus metalliredigens (strain QYMF), this protein is Small ribosomal subunit protein uS9.